Reading from the N-terminus, the 752-residue chain is Xanthine dehydrogenase molybdenum-binding subunit (752 aa).

Mo-molybdopterin contacts are provided by Q206, F237, R350, and A516.

It belongs to the xanthine dehydrogenase family. Heterotrimer of XdhA, XdhB and XdhC. Mo-molybdopterin is required as a cofactor.

The enzyme catalyses xanthine + NAD(+) + H2O = urate + NADH + H(+). The catalysed reaction is hypoxanthine + NAD(+) + H2O = xanthine + NADH + H(+). It functions in the pathway purine metabolism; hypoxanthine degradation; urate from hypoxanthine: step 1/2. Its pathway is purine metabolism; hypoxanthine degradation; urate from hypoxanthine: step 2/2. In terms of biological role, presumed to be a dehydrogenase, but possibly an oxidase. Participates in limited purine salvage (requires aspartate) but does not support aerobic growth on purines as the sole carbon source (purine catabolism). This Escherichia coli O157:H7 protein is Xanthine dehydrogenase molybdenum-binding subunit (xdhA).